The primary structure comprises 634 residues: Poly(ribitol-phosphate) beta-glucosyltransferase (634 aa).

The protein belongs to the glycosyltransferase 2 family.

It catalyses the reaction 4-O-[(D-ribitylphospho)(n)-D-ribitylphospho-(2R)-glycerylphospho]-N-acetyl-beta-D-mannosaminyl-(1-&gt;4)-N-acetyl-alpha-D-glucosaminyl di-trans,octa-cis-undecaprenyl diphosphate + n UDP-alpha-D-glucose = 4-O-[(2-beta-D-glucosyl-D-ribitylphospho)(n)-D-ribitylphospho-(2R)-glycerylphospho]-N-acetyl-beta-D-mannosaminyl-(1-&gt;4)-N-acetyl-alpha-D-glucosaminyl di-trans,octa-cis-undecaprenyl diphosphate + n UDP + n H(+). The protein operates within cell wall biogenesis; poly(ribitol phosphate) teichoic acid biosynthesis. In terms of biological role, attaches glucose residues to poly(RboP)-wall teichoic acids (WTAs). The sequence is that of Poly(ribitol-phosphate) beta-glucosyltransferase from Bacillus spizizenii (strain ATCC 23059 / NRRL B-14472 / W23) (Bacillus subtilis subsp. spizizenii).